Reading from the N-terminus, the 342-residue chain is Anthranilate phosphoribosyltransferase (342 aa).

5-phospho-alpha-D-ribose 1-diphosphate contacts are provided by residues glycine 80, 83-84, threonine 88, 90-93, 108-116, and serine 120; these read GD, NIST, and KHGNRAVSS. Glycine 80 is an anthranilate binding site. Serine 92 lines the Mg(2+) pocket. Asparagine 111 lines the anthranilate pocket. Arginine 166 is a binding site for anthranilate. Residues aspartate 225 and glutamate 226 each contribute to the Mg(2+) site.

This sequence belongs to the anthranilate phosphoribosyltransferase family. As to quaternary structure, homodimer. Mg(2+) serves as cofactor.

The enzyme catalyses N-(5-phospho-beta-D-ribosyl)anthranilate + diphosphate = 5-phospho-alpha-D-ribose 1-diphosphate + anthranilate. Its pathway is amino-acid biosynthesis; L-tryptophan biosynthesis; L-tryptophan from chorismate: step 2/5. Its function is as follows. Catalyzes the transfer of the phosphoribosyl group of 5-phosphorylribose-1-pyrophosphate (PRPP) to anthranilate to yield N-(5'-phosphoribosyl)-anthranilate (PRA). The protein is Anthranilate phosphoribosyltransferase of Halalkalibacterium halodurans (strain ATCC BAA-125 / DSM 18197 / FERM 7344 / JCM 9153 / C-125) (Bacillus halodurans).